Consider the following 453-residue polypeptide: MHKQELPRAQKLAERAFANLERFLHIEAVSGIVLLIAAVAALIWANSPAADSYEALWHTPLTFGVGSHVYSQSLHFWINDGLMTIFFLVVGMEIRREIHEGALSSLRQATLPMAAAVGGVAVPALLYLSFGHAPADQQGWAVPTATDIAFAVGVLALLGKSIPSNVRVFLLALAIIDDIIAVLIIAFFYSGGLDYTGFGVAVIGLLMVIGLQKIGVGSAYAYVIPGAIVWLGILLTGAHPTLAGVVLGLMTPVTAMPMRERPLDAITRFTGELLGRAKAPEQDASDLMDPLKRLRLAQRELLPPVVRMQGTLHPWVAFGIMPVFALANAGVSLSGVDLSAEGPQWVMIAVAVALVAGKPLGIVSVSWLMVRLGWCVLPAEVNWRSIMLVGLLAGIGFTMSIFIANLAFVDPGSLGAAKLGVLSASLIAAVLGLTWGVWSMRSAASATKAGSPT.

12 helical membrane passes run 23–43 (FLHI…AALI), 74–94 (LHFW…GMEI), 111–131 (LPMA…LSFG), 139–159 (GWAV…ALLG), 168–188 (VFLL…IAFF), 191–211 (GGLD…VIGL), 214–234 (IGVG…LGIL), 235–255 (LTGA…PVTA), 316–336 (VAFG…LSGV), 345–365 (WVMI…IVSV), 386–406 (IMLV…IANL), and 419–439 (LGVL…GVWS).

Belongs to the NhaA Na(+)/H(+) (TC 2.A.33) antiporter family.

Its subcellular location is the cell inner membrane. The enzyme catalyses Na(+)(in) + 2 H(+)(out) = Na(+)(out) + 2 H(+)(in). Functionally, na(+)/H(+) antiporter that extrudes sodium in exchange for external protons. The sequence is that of Na(+)/H(+) antiporter NhaA 2 from Pseudomonas putida (strain ATCC 47054 / DSM 6125 / CFBP 8728 / NCIMB 11950 / KT2440).